Here is a 421-residue protein sequence, read N- to C-terminus: Testin (421 aa).

Residues 92–199 (MILTNPVAAK…GDVKLPCEMD (108 aa)) form the PET domain. Residues 133–164 (EKQPVAGSEGAQYRKKQLAKQLPAHDQDPSKC) are disordered. Over residues 155-164 (PAHDQDPSKC) the composition is skewed to basic and acidic residues. LIM zinc-binding domains lie at 234–297 (YSCY…CDSE), 299–359 (PRCA…NHAV), and 362–421 (QGCH…KMMS).

This sequence belongs to the prickle / espinas / testin family. In terms of assembly, interacts via LIM domain 1 with ZYX. Interacts (via LIM domain 3) with ENAH and VASP. Interacts with ALKBH4, talin, actin, alpha-actinin, GRIP1 and PXN. Interacts (via LIM domain 2) with ACTL7A (via N-terminus). Heterodimer with ACTL7A; the heterodimer interacts with ENAH to form a heterotrimer.

The protein resides in the cytoplasm. Its subcellular location is the cell junction. The protein localises to the focal adhesion. Its function is as follows. Scaffold protein that may play a role in cell adhesion, cell spreading and in the reorganization of the actin cytoskeleton. Plays a role in the regulation of cell proliferation. May act as a tumor suppressor. The chain is Testin (TES) from Callithrix jacchus (White-tufted-ear marmoset).